Here is a 203-residue protein sequence, read N- to C-terminus: Thymidylate kinase (203 aa).

Residue 14-21 (GGEGIGKS) coordinates ATP.

The protein belongs to the thymidylate kinase family.

It carries out the reaction dTMP + ATP = dTDP + ADP. Functionally, phosphorylation of dTMP to form dTDP in both de novo and salvage pathways of dTTP synthesis. In Rickettsia africae (strain ESF-5), this protein is Thymidylate kinase.